Reading from the N-terminus, the 148-residue chain is Large-conductance mechanosensitive channel (148 aa).

Transmembrane regions (helical) follow at residues 21-41 (IDLAVGVIIGAAFGKIVDSVV), 45-65 (IMPLVNYILGGSVDFSNKFLV), and 92-112 (GNFLTILINFILLALVVFIIV).

Belongs to the MscL family. As to quaternary structure, homopentamer.

It is found in the cell inner membrane. In terms of biological role, channel that opens in response to stretch forces in the membrane lipid bilayer. May participate in the regulation of osmotic pressure changes within the cell. The sequence is that of Large-conductance mechanosensitive channel from Bordetella petrii (strain ATCC BAA-461 / DSM 12804 / CCUG 43448).